The following is a 350-amino-acid chain: Proton-activated chloride channel (350 aa).

The disordered stretch occupies residues 1–51; that stretch reads MEAIRKELSRSYQELNDETDPIARDPEGAQEEEQEEAASAVVPDRDSDRSN. Residues 1-63 lie on the Cytoplasmic side of the membrane; sequence MEAIRKELSR…VHFSRTCLKN (63 aa). The helical transmembrane segment at 64–84 threads the bilayer; that stretch reads VFSVLLIFVYLLLMGVAVFLV. The Extracellular portion of the chain corresponds to 85–297; that stretch reads YQTITDFRDK…KDPYIQEIQD (213 aa). Residues 298-318 form a helical membrane-spanning segment; it reads IITANPWSMIALLCSVFLVLF. The Cytoplasmic segment spans residues 319–350; that stretch reads KAADFAKLSVKWMIKVRRRHLKKRTRELNHIS.

Belongs to the proton-activated chloride channel family.

The protein resides in the cell membrane. The enzyme catalyses chloride(in) = chloride(out). In terms of biological role, chloride channel gated by pH that facilitates the entry of chloride ions into cells upon exposure to extracellular acidic pH. In Xenopus laevis (African clawed frog), this protein is Proton-activated chloride channel.